We begin with the raw amino-acid sequence, 229 residues long: Lipoprotein-releasing system ATP-binding protein LolD (229 aa).

In terms of domain architecture, ABC transporter spans 9 to 228 (HGLRKIYREA…QDGNLVQVEV (220 aa)). 42 to 49 (GSSGSGKS) is a binding site for ATP.

It belongs to the ABC transporter superfamily. Lipoprotein translocase (TC 3.A.1.125) family. As to quaternary structure, the complex is composed of two ATP-binding proteins (LolD) and two transmembrane proteins (LolC and LolE).

It is found in the cell inner membrane. Part of the ABC transporter complex LolCDE involved in the translocation of mature outer membrane-directed lipoproteins, from the inner membrane to the periplasmic chaperone, LolA. Responsible for the formation of the LolA-lipoprotein complex in an ATP-dependent manner. The chain is Lipoprotein-releasing system ATP-binding protein LolD from Photobacterium profundum (strain SS9).